Here is a 443-residue protein sequence, read N- to C-terminus: Thymidine phosphorylase (443 aa).

Belongs to the thymidine/pyrimidine-nucleoside phosphorylase family. In terms of assembly, homodimer.

The enzyme catalyses thymidine + phosphate = 2-deoxy-alpha-D-ribose 1-phosphate + thymine. It participates in pyrimidine metabolism; dTMP biosynthesis via salvage pathway; dTMP from thymine: step 1/2. Its function is as follows. The enzymes which catalyze the reversible phosphorolysis of pyrimidine nucleosides are involved in the degradation of these compounds and in their utilization as carbon and energy sources, or in the rescue of pyrimidine bases for nucleotide synthesis. The sequence is that of Thymidine phosphorylase from Shewanella sediminis (strain HAW-EB3).